The chain runs to 218 residues: 7-cyano-7-deazaguanine synthase (218 aa).

11 to 21 lines the ATP pocket; that stretch reads LSGGMDSATLL. Residues cysteine 193, cysteine 201, cysteine 204, and cysteine 207 each coordinate Zn(2+).

Belongs to the QueC family. The cofactor is Zn(2+).

The catalysed reaction is 7-carboxy-7-deazaguanine + NH4(+) + ATP = 7-cyano-7-deazaguanine + ADP + phosphate + H2O + H(+). It functions in the pathway purine metabolism; 7-cyano-7-deazaguanine biosynthesis. In terms of biological role, catalyzes the ATP-dependent conversion of 7-carboxy-7-deazaguanine (CDG) to 7-cyano-7-deazaguanine (preQ(0)). This chain is 7-cyano-7-deazaguanine synthase, found in Aquifex aeolicus (strain VF5).